An 878-amino-acid chain; its full sequence is Valine--tRNA ligase (878 aa).

Positions 43–53 (PYPTGRLHLGH) match the 'HIGH' region motif. The 'KMSKS' region signature appears at 527-531 (KMSKS). Lys-530 contacts ATP.

It belongs to the class-I aminoacyl-tRNA synthetase family. ValS type 2 subfamily.

It is found in the cytoplasm. It catalyses the reaction tRNA(Val) + L-valine + ATP = L-valyl-tRNA(Val) + AMP + diphosphate. Catalyzes the attachment of valine to tRNA(Val). As ValRS can inadvertently accommodate and process structurally similar amino acids such as threonine, to avoid such errors, it has a 'posttransfer' editing activity that hydrolyzes mischarged Thr-tRNA(Val) in a tRNA-dependent manner. This Methanocaldococcus jannaschii (strain ATCC 43067 / DSM 2661 / JAL-1 / JCM 10045 / NBRC 100440) (Methanococcus jannaschii) protein is Valine--tRNA ligase.